The chain runs to 467 residues: Tubulointerstitial nephritis antigen-like (467 aa).

The signal sequence occupies residues 1–21; sequence MWRCPLGLLLLLPLAGHLALG. In terms of domain architecture, SMB spans 50–98; the sequence is EQDLCCRGRADDCALPYLGAICYCDLFCNRTVSDCCPDFWDFCLGVPPP. Disulfide bonds link Cys54–Cys73, Cys71–Cys73, Cys71–Cys85, Cys77–Cys84, and Cys85–Cys92. Asn78 is a glycosylation site (N-linked (GlcNAc...) asparagine). Residue Asn161 is glycosylated (N-linked (GlcNAc...) asparagine).

This sequence belongs to the peptidase C1 family. Glycosylated. Highly expressed in aorta, heart, placenta, kidney and a colorectal adenocarcinoma cell line. Moderately expressed in skeletal muscle, pancreas, lung, lymph nodes, adrenal gland, bone marrow and thyroid. Weakly expressed in colon, small intestine, ovary, spleen, testis and prostate. Predominantly found in vascular smooth muscle cells, but also in cardiac and skeletal muscle cells as well as kidney.

It localises to the secreted. Functionally, may be implicated in the adrenocortical zonation and in mechanisms for repressing the CYP11B1 gene expression in adrenocortical cells. This is a non catalytic peptidase C1 family protein. The polypeptide is Tubulointerstitial nephritis antigen-like (TINAGL1) (Homo sapiens (Human)).